The following is a 141-amino-acid chain: MMTERTFSIIKSDAVKRNLIGAILTRFEQNGFKIIASKMVRLTREQAEGFYAEHQGKEFFAPLVEYMMSSPIVVSVLEKENAVKDYRTLIGTTNPETAEEGTIRKDFALSQRENSVHGSDSIENANREIAYFFTDCEIFER.

Residues lysine 11, phenylalanine 59, arginine 87, threonine 93, arginine 104, and asparagine 114 each contribute to the ATP site. The Pros-phosphohistidine intermediate role is filled by histidine 117.

Belongs to the NDK family. Homotetramer. Mg(2+) is required as a cofactor.

It localises to the cytoplasm. The catalysed reaction is a 2'-deoxyribonucleoside 5'-diphosphate + ATP = a 2'-deoxyribonucleoside 5'-triphosphate + ADP. The enzyme catalyses a ribonucleoside 5'-diphosphate + ATP = a ribonucleoside 5'-triphosphate + ADP. Major role in the synthesis of nucleoside triphosphates other than ATP. The ATP gamma phosphate is transferred to the NDP beta phosphate via a ping-pong mechanism, using a phosphorylated active-site intermediate. The sequence is that of Nucleoside diphosphate kinase from Haemophilus influenzae (strain 86-028NP).